Here is a 771-residue protein sequence, read N- to C-terminus: Carnitine O-palmitoyltransferase 1, muscle isoform (771 aa).

Over 1 to 47 (MAEAHQAVAFQFTVTPEGVDFQLSREVLKHIYLSVIRSWKKRLIRIK) the chain is Cytoplasmic. The helical transmembrane segment at 48–73 (NGILRGVYPGSPTSWLVVVMATAGSS) threads the bilayer. The Mitochondrial intermembrane portion of the chain corresponds to 74 to 101 (YYNVDISMGLVYYIQRWLPEGRPYRTPY). Residues 102-121 (TRTLFSMAIFSTGVWMMGIF) form a helical membrane-spanning segment. The Cytoplasmic portion of the chain corresponds to 122–771 (FFRQTLKLLL…NLFQVPKADG (650 aa)). The active-site Proton acceptor is the His472. Residue 554–566 (GKGLIKKCRTSPD) coordinates CoA. Tyr588 and Thr601 together coordinate (R)-carnitine.

The protein belongs to the carnitine/choline acetyltransferase family.

The protein resides in the mitochondrion outer membrane. It catalyses the reaction (R)-carnitine + hexadecanoyl-CoA = O-hexadecanoyl-(R)-carnitine + CoA. It functions in the pathway lipid metabolism; fatty acid beta-oxidation. Functionally, catalyzes the transfer of the acyl group of long-chain fatty acid-CoA conjugates onto carnitine, an essential step for the mitochondrial uptake of long-chain fatty acids and their subsequent beta-oxidation in the mitochondrion. The polypeptide is Carnitine O-palmitoyltransferase 1, muscle isoform (CPT1B) (Bos taurus (Bovine)).